A 189-amino-acid chain; its full sequence is Apolipoprotein D (189 aa).

Positions Met1–Gly20 are cleaved as a signal peptide. The residue at position 21 (Gln21) is a Pyrrolidone carboxylic acid. Disulfide bonds link Cys28/Cys134 and Cys61/Cys185. Residues Asn65 and Asn98 are each glycosylated (N-linked (GlcNAc...) (complex) asparagine).

It belongs to the calycin superfamily. Lipocalin family. As to quaternary structure, homodimer. In plasma, also exists as a disulfide-linked heterodimer with APOA2. N-glycosylated. N-glycan heterogeneity at Asn-65: Hex5HexNAc4 (major) and Hex6HexNAc5 (minor); at Asn-98: Hex5HexNAc4 (minor), dHex1Hex5HexNAc4 (major), dHex1Hex6HexNAc5 (minor) and dHex1Hex7HexNAc6 (minor). In terms of tissue distribution, expressed in liver, intestine, pancreas, kidney, placenta, adrenal, spleen, fetal brain tissue and tears.

The protein resides in the secreted. Its function is as follows. APOD occurs in the macromolecular complex with lecithin-cholesterol acyltransferase. It is probably involved in the transport and binding of bilin. Appears to be able to transport a variety of ligands in a number of different contexts. This chain is Apolipoprotein D (APOD), found in Homo sapiens (Human).